A 146-amino-acid chain; its full sequence is Cytochrome c oxidase subunit 5A, mitochondrial (146 aa).

The N-terminal 37 residues, 1–37 (MLAAALRRCTAAAAARGLLHPVSAPSPAAAVCSIRCY), are a transit peptide targeting the mitochondrion. The short motif at 2-16 (LAAALRRCTAAAAAR) is the SIFI-degron element. N6-acetyllysine is present on residues lysine 83 and lysine 109. Threonine 137 is modified (phosphothreonine).

Component of the cytochrome c oxidase (complex IV, CIV), a multisubunit enzyme composed of 14 subunits. The complex is composed of a catalytic core of 3 subunits MT-CO1, MT-CO2 and MT-CO3, encoded in the mitochondrial DNA, and 11 supernumerary subunits COX4I, COX5A, COX5B, COX6A, COX6B, COX6C, COX7A, COX7B, COX7C, COX8 and NDUFA4, which are encoded in the nuclear genome. The complex exists as a monomer or a dimer and forms supercomplexes (SCs) in the inner mitochondrial membrane with NADH-ubiquinone oxidoreductase (complex I, CI) and ubiquinol-cytochrome c oxidoreductase (cytochrome b-c1 complex, complex III, CIII), resulting in different assemblies (supercomplex SCI(1)III(2)IV(1) and megacomplex MCI(2)III(2)IV(2)). Interacts with AFG1L. Interacts with RAB5IF. In terms of processing, in response to mitochondrial stress, the precursor protein is ubiquitinated by the SIFI complex in the cytoplasm before mitochondrial import, leading to its degradation. Within the SIFI complex, UBR4 initiates ubiquitin chain that are further elongated or branched by KCMF1. As to expression, expressed in the head of epididymal sperm but not in testicular sperm (at protein level).

It is found in the mitochondrion inner membrane. The protein operates within energy metabolism; oxidative phosphorylation. Its function is as follows. Component of the cytochrome c oxidase, the last enzyme in the mitochondrial electron transport chain which drives oxidative phosphorylation. The respiratory chain contains 3 multisubunit complexes succinate dehydrogenase (complex II, CII), ubiquinol-cytochrome c oxidoreductase (cytochrome b-c1 complex, complex III, CIII) and cytochrome c oxidase (complex IV, CIV), that cooperate to transfer electrons derived from NADH and succinate to molecular oxygen, creating an electrochemical gradient over the inner membrane that drives transmembrane transport and the ATP synthase. Cytochrome c oxidase is the component of the respiratory chain that catalyzes the reduction of oxygen to water. Electrons originating from reduced cytochrome c in the intermembrane space (IMS) are transferred via the dinuclear copper A center (CU(A)) of subunit 2 and heme A of subunit 1 to the active site in subunit 1, a binuclear center (BNC) formed by heme A3 and copper B (CU(B)). The BNC reduces molecular oxygen to 2 water molecules using 4 electrons from cytochrome c in the IMS and 4 protons from the mitochondrial matrix. The sequence is that of Cytochrome c oxidase subunit 5A, mitochondrial (Cox5a) from Rattus norvegicus (Rat).